A 59-amino-acid chain; its full sequence is UPF0181 protein YoaH (59 aa).

It belongs to the UPF0181 family.

This is UPF0181 protein YoaH from Shigella flexneri serotype 5b (strain 8401).